The chain runs to 419 residues: Ubiquitin-like modifier-activating enzyme 5 (419 aa).

Residues 18–47 (NRLGNVKKDHPLESSSNSKPTHQPKSPAPY) are disordered. The segment covering 30-41 (ESSSNSKPTHQP) has biased composition (polar residues). ATP contacts are provided by G94, D115, K138, N161, and N194. Zn(2+) is bound by residues C236 and C239. The Glycyl thioester intermediate role is filled by C260. The Zn(2+) site is built by C313 and C318.

This sequence belongs to the ubiquitin-activating E1 family. UBA5 subfamily. In terms of assembly, interacts with ufc-1. As to expression, expressed in the intestine.

In terms of biological role, E1-like enzyme which activates ufm-1. Required for interaction between ufm-1 and ufc-1. In Caenorhabditis elegans, this protein is Ubiquitin-like modifier-activating enzyme 5.